Reading from the N-terminus, the 157-residue chain is Putative gamma-glutamylcyclotransferase CG2811 (157 aa).

Position 14–17 (14–17) interacts with substrate; the sequence is YGTL. Glu-89 serves as the catalytic Proton acceptor.

It belongs to the gamma-glutamylcyclotransferase family.

In terms of biological role, putative gamma-glutamylcyclotransferase. This chain is Putative gamma-glutamylcyclotransferase CG2811, found in Drosophila melanogaster (Fruit fly).